The primary structure comprises 852 residues: RNA-binding protein 10 (852 aa).

2 stretches are compositionally biased toward basic and acidic residues: residues 1–14 (MEYE…DRTG) and 21–45 (RSQD…RSYP). Residues 1 to 78 (MEYERRGGRG…RGQLQSHGVQ (78 aa)) form a disordered region. The RRM 1 domain maps to 37-132 (RDMDYRSYPR…QKVSMHYSDP (96 aa)). Residue Ser61 is modified to Phosphoserine. The segment at 135-165 (KINEDWLCNKCGVQNFKRREKCFKCGVPKSE) adopts a RanBP2-type zinc-finger fold. In terms of domain architecture, RRM 2 spans 223 to 307 (DTIILRNLNP…KTINVEFAKG (85 aa)). Position 306 is an N6-acetyllysine (Lys306). Disordered stretches follow at residues 343-365 (GGES…QQDE), 386-410 (KGPG…EGGT), 426-446 (APGL…ATNS), 459-489 (SELQ…YPVP), 542-568 (EQSA…HKTK), and 634-675 (DLPK…EEKL). Over residues 430–446 (YQQSAEGSSGQGTATNS) the composition is skewed to polar residues. Low complexity predominate over residues 463 to 484 (SPTHPSSALPPATSPTAPESYS). Positions 545 to 561 (ADGHKDTGASSKEGKEK) are enriched in basic and acidic residues. Phosphoserine occurs at positions 640, 645, 655, 658, and 660. Positions 665-675 (ERGGPEREEKL) are enriched in basic and acidic residues. The C2H2-type; atypical zinc finger occupies 681–706 (LACLLCRRQFPSKEALIRHQQLSGLH). 3 positions are modified to phosphoserine: Ser703, Ser719, and Ser767. The interval 740–783 (AAERREKYGIPEPPEPKRRKYGGISTASVDFEQPTRDGLGSDNI) is disordered. A G-patch domain is found at 780–826 (SDNIGSRMLQAMGWKEGSGLGRKKQGIVTPIEAQTRVRGSGLGARGS). Residue Arg824 is modified to Omega-N-methylarginine.

Associates with the spliceosome. Component of a large chromatin remodeling complex, at least composed of MYSM1, PCAF, RBM10 and KIF11/TRIP5.

It localises to the nucleus. Functionally, binds to ssRNA containing the consensus sequence 5'-AGGUAA-3'. May be involved in post-transcriptional processing, most probably in mRNA splicing. Binds to RNA homopolymers, with a preference for poly(G) and poly(U) and little for poly(A). May bind to specific miRNA hairpins. This chain is RNA-binding protein 10, found in Rattus norvegicus (Rat).